A 362-amino-acid polypeptide reads, in one-letter code: Glutaminase-asparaginase (362 aa).

The signal sequence occupies residues 1 to 25; that stretch reads MKSALKTFVPGALALLLLFPVAAQA. The region spanning 35-362 is the Asparaginase/glutaminase domain; the sequence is ANVVILATGG…KELQRMFWEY (328 aa). The active-site Acyl-ester intermediate is threonine 45. Substrate is bound by residues serine 92 and 125-126; that span reads TD.

The protein belongs to the asparaginase 1 family. As to quaternary structure, homotetramer.

It localises to the periplasm. It carries out the reaction L-glutamine + H2O = L-glutamate + NH4(+). It catalyses the reaction L-asparagine + H2O = L-aspartate + NH4(+). This is Glutaminase-asparaginase from Pseudomonas fluorescens biotype A.